The sequence spans 164 residues: Nucleotide-binding protein Emin_0136 (164 aa).

It belongs to the YajQ family.

Its function is as follows. Nucleotide-binding protein. In Elusimicrobium minutum (strain Pei191), this protein is Nucleotide-binding protein Emin_0136.